The chain runs to 371 residues: Nuclear hormone receptor family member nhr-51 (371 aa).

The nuclear receptor DNA-binding region spans N2 to V77. 2 NR C4-type zinc fingers span residues C5 to C25 and C41 to C60. Positions M98–D337 constitute an NR LBD domain.

Belongs to the nuclear hormone receptor family.

The protein localises to the nucleus. In terms of biological role, orphan nuclear receptor. The polypeptide is Nuclear hormone receptor family member nhr-51 (nhr-51) (Caenorhabditis elegans).